The sequence spans 602 residues: tRNA uridine 5-carboxymethylaminomethyl modification enzyme MnmG (602 aa).

10 to 15 (GGGHAG) contributes to the FAD binding site. The interval 217-242 (DPQPRGFTGRPGPRAAESPTWQTHTT) is disordered. NAD(+) is bound at residue 267-281 (GPRYCPSIEDKVVRF).

The protein belongs to the MnmG family. As to quaternary structure, homodimer. Heterotetramer of two MnmE and two MnmG subunits. The cofactor is FAD.

It is found in the cytoplasm. Its function is as follows. NAD-binding protein involved in the addition of a carboxymethylaminomethyl (cmnm) group at the wobble position (U34) of certain tRNAs, forming tRNA-cmnm(5)s(2)U34. This chain is tRNA uridine 5-carboxymethylaminomethyl modification enzyme MnmG, found in Deinococcus geothermalis (strain DSM 11300 / CIP 105573 / AG-3a).